Consider the following 66-residue polypeptide: Ocellatin-PT4 (66 aa).

An N-terminal signal peptide occupies residues 1-22 (MAFLKKSLFLVLFLGLVSLSIC). The propeptide occupies 23 to 39 (DEEKRQDEDDDDDDDEE). Position 66 is a valine amide (Val-66).

In terms of tissue distribution, expressed by the skin glands.

It is found in the secreted. Functionally, has antibacterial activity against Gram-negative bacteria E.coli ATCC 25922 (MIC=80 uM), K.pneumoniae ATCC 700603 (MIC=310 uM) and S.choleraesuis ATCC 14028 (MIC=310 uM). Shows no hemolytic activity and no cytotoxicity. This chain is Ocellatin-PT4, found in Leptodactylus pustulatus (Ceara white-lipped frog).